The chain runs to 529 residues: Tyrosinase (529 aa).

The first 18 residues, 1-18 (MLLAVLYCLLWSFQTSAG), serve as a signal peptide directing secretion. Residues 19 to 476 (HFPRACVSSK…YLEQASRIWS (458 aa)) lie on the Lumenal, melanosome side of the membrane. N-linked (GlcNAc...) asparagine glycans are attached at residues N86, N111, and N161. Positions 180, 202, and 211 each coordinate Cu cation. Residue N230 is glycosylated (N-linked (GlcNAc...) asparagine). Positions 287–313 (SLCNGTPEGPLRRNPGNHDKSRTPRLP) are disordered. N337 carries an N-linked (GlcNAc...) asparagine glycan. Positions 363 and 367 each coordinate Cu cation. An N-linked (GlcNAc...) asparagine glycan is attached at N371. Residue H390 coordinates Cu cation. Residues 477–497 (WLLGAAMVGAVLTALLAGLVS) form a helical membrane-spanning segment. Residues 498–529 (LLCRHKRKQLPEEKQPLLMEKEDYHSLYQSHL) are Cytoplasmic-facing.

This sequence belongs to the tyrosinase family. As to quaternary structure, forms an OPN3-dependent complex with DCT in response to blue light in melanocytes. Cu(2+) is required as a cofactor. In terms of processing, glycosylated.

The protein resides in the melanosome membrane. The protein localises to the melanosome. It catalyses the reaction 2 L-dopa + O2 = 2 L-dopaquinone + 2 H2O. It carries out the reaction L-tyrosine + O2 = L-dopaquinone + H2O. The catalysed reaction is 2 5,6-dihydroxyindole-2-carboxylate + O2 = 2 indole-5,6-quinone-2-carboxylate + 2 H2O. Functionally, this is a copper-containing oxidase that functions in the formation of pigments such as melanins and other polyphenolic compounds. Catalyzes the initial and rate limiting step in the cascade of reactions leading to melanin production from tyrosine. In addition to hydroxylating tyrosine to DOPA (3,4-dihydroxyphenylalanine), also catalyzes the oxidation of DOPA to DOPA-quinone, and possibly the oxidation of DHI (5,6-dihydroxyindole) to indole-5,6 quinone. The sequence is that of Tyrosinase from Homo sapiens (Human).